The sequence spans 317 residues: Nitrilase (317 aa).

The region spanning 5 to 280 (VKVAVVQAEP…DGVIISELDM (276 aa)) is the CN hydrolase domain. E45 serves as the catalytic Proton acceptor. K125 is an active-site residue. C165 acts as the Nucleophile in catalysis.

The protein belongs to the carbon-nitrogen hydrolase superfamily. Nitrilase family.

It catalyses the reaction a nitrile + 2 H2O = a carboxylate + NH4(+). Functionally, nitrilase that hydrolyzes preferentially 4-cyanopyridine. Is also able to hydrolyze some aliphatic nitriles, such as phenylacetonitrile. The polypeptide is Nitrilase (Meyerozyma guilliermondii (strain ATCC 6260 / CBS 566 / DSM 6381 / JCM 1539 / NBRC 10279 / NRRL Y-324) (Yeast)).